Here is a 1700-residue protein sequence, read N- to C-terminus: A-kinase anchor protein SPHKAP (1700 aa).

Disordered stretches follow at residues 364 to 385 (SNLNPGDHEDTRNALPPRQDGE), 742 to 778 (IRRRETEPSCQPSDPGASQAWTKATESSSSSPLSNSH), and 793 to 885 (SKQD…NTQE). The segment covering 768-778 (SSSSSPLSNSH) has biased composition (low complexity). Polar residues predominate over residues 822–831 (DSSTATTSSK). Basic and acidic residues predominate over residues 839–855 (AGEDTKSPHHSENECRA). Over residues 857–873 (SEGQRSPTVSQSRSGSQ) the composition is skewed to polar residues. The tract at residues 929 to 946 (FAEELADTVVSMATEIAA) is PKA-RII subunit binding domain. The interval 980–1006 (KRKKESQGSGTAVRKHKPPRLSEIKRK) is disordered. Residues S1025, S1085, S1107, S1120, S1121, S1124, S1259, and S1288 each carry the phosphoserine modification. Disordered stretches follow at residues 1374–1414 (DSVT…PVPI), 1481–1535 (IHSD…DTSS), and 1585–1604 (GQSESTEAPASGPPTGTASP). Residues 1383–1398 (PVSSLSKTASLTNHSP) show a composition bias toward polar residues. A compositionally biased stretch (polar residues) spans 1586–1604 (QSESTEAPASGPPTGTASP).

This sequence belongs to the AKAP110 family. As to quaternary structure, interacts (via the PKA-RII subunit binding domain) with the RI subunit of PKA. Interacts with SPHK1; the interaction greatly reduces SPHK1 activity. As to expression, highly expressed in heart. Both isoforms abundantly expressed in ventricle. Also expressed in spleen, ovary and brain.

It is found in the cytoplasm. Anchoring protein that binds preferentially to the type I regulatory subunit of c-AMP-dependent protein kinase (PKA type I) and targets it to distinct subcellular compartments. May act as a converging factor linking cAMP and sphingosine signaling pathways. Plays a regulatory role in the modulation of SPHK1. The chain is A-kinase anchor protein SPHKAP (SPHKAP) from Homo sapiens (Human).